We begin with the raw amino-acid sequence, 194 residues long: Crossover junction endodeoxyribonuclease RuvC (194 aa).

Catalysis depends on residues Asp7, Glu68, and Asp141. 3 residues coordinate Mg(2+): Asp7, Glu68, and Asp141.

It belongs to the RuvC family. As to quaternary structure, homodimer which binds Holliday junction (HJ) DNA. The HJ becomes 2-fold symmetrical on binding to RuvC with unstacked arms; it has a different conformation from HJ DNA in complex with RuvA. In the full resolvosome a probable DNA-RuvA(4)-RuvB(12)-RuvC(2) complex forms which resolves the HJ. Mg(2+) serves as cofactor.

Its subcellular location is the cytoplasm. The catalysed reaction is Endonucleolytic cleavage at a junction such as a reciprocal single-stranded crossover between two homologous DNA duplexes (Holliday junction).. Its function is as follows. The RuvA-RuvB-RuvC complex processes Holliday junction (HJ) DNA during genetic recombination and DNA repair. Endonuclease that resolves HJ intermediates. Cleaves cruciform DNA by making single-stranded nicks across the HJ at symmetrical positions within the homologous arms, yielding a 5'-phosphate and a 3'-hydroxyl group; requires a central core of homology in the junction. The consensus cleavage sequence is 5'-(A/T)TT(C/G)-3'. Cleavage occurs on the 3'-side of the TT dinucleotide at the point of strand exchange. HJ branch migration catalyzed by RuvA-RuvB allows RuvC to scan DNA until it finds its consensus sequence, where it cleaves and resolves the cruciform DNA. In Mycolicibacterium vanbaalenii (strain DSM 7251 / JCM 13017 / BCRC 16820 / KCTC 9966 / NRRL B-24157 / PYR-1) (Mycobacterium vanbaalenii), this protein is Crossover junction endodeoxyribonuclease RuvC.